The chain runs to 282 residues: Putative phosphoenolpyruvate synthase regulatory protein (282 aa).

162-169 contacts ADP; the sequence is GVSRSGKT.

Belongs to the pyruvate, phosphate/water dikinase regulatory protein family. PSRP subfamily.

It carries out the reaction [pyruvate, water dikinase] + ADP = [pyruvate, water dikinase]-phosphate + AMP + H(+). The catalysed reaction is [pyruvate, water dikinase]-phosphate + phosphate + H(+) = [pyruvate, water dikinase] + diphosphate. Bifunctional serine/threonine kinase and phosphorylase involved in the regulation of the phosphoenolpyruvate synthase (PEPS) by catalyzing its phosphorylation/dephosphorylation. This chain is Putative phosphoenolpyruvate synthase regulatory protein, found in Psychrobacter arcticus (strain DSM 17307 / VKM B-2377 / 273-4).